The chain runs to 579 residues: General transcriptional corepressor tupA (579 aa).

Residues 83-101 (NINASQRDLNSPSTFRSNS) show a composition bias toward polar residues. The tract at residues 83–258 (NINASQRDLN…ENGKEKGTDW (176 aa)) is disordered. 3 stretches are compositionally biased toward low complexity: residues 109 to 128 (NNNN…NNNN), 157 to 198 (QQPG…LSPL), and 207 to 224 (MGNN…NNNN). The span at 227–256 (KKPDMEEVKEEDRRRHDTEMSEENGKEKGT) shows a compositional bias: basic and acidic residues. 7 WD repeats span residues 279–319 (QHNS…HAFV), 325–364 (DGDL…IQHT), 367–406 (GHEL…CAFT), 413–452 (GPKN…FLER), 455–494 (GHLD…SRSR), 501–540 (GHKD…THMM), and 543–579 (GHKN…KYDS).

Belongs to the WD repeat TUP1 family. In terms of assembly, associates with trfA to form the trfA-tupA corepressor complex.

The protein localises to the nucleus. Functionally, acts as a component of the trfA-tupA corepressor complex which is involved in the repression of many genes in a wide variety of physiological processes. May also be involved in the derepression of at least some target genes. The complex is recruited to target genes by interaction with DNA-bound transcriptional repressors. The complex recruits histone deacetylases to produce a repressive chromatin structure, interacts with hypoacetylated N-terminal tails of histones H3 and H4 that have been programmed for repression by the action of histone deacetylases and interferes directly with the transcriptional machinery by associating with the RNA polymerase II mediator complex. This Dictyostelium discoideum (Social amoeba) protein is General transcriptional corepressor tupA (tupA).